The sequence spans 1229 residues: Putative cell division cycle ATPase (1229 aa).

Over residues 252 to 267 (GKKNNNGNVKKGIKNV) the composition is skewed to low complexity. The disordered stretch occupies residues 252–315 (GKKNNNGNVK…GGKNNSYYNE (64 aa)). Positions 268–281 (PMDEKSYSPNDHDN) are enriched in basic and acidic residues. Low complexity predominate over residues 282–314 (NSNNSNNNNNNDNNNSNNNNNNNNGGKNNSYYN). 568-575 (GIPGTGKT) lines the ATP pocket. Disordered stretches follow at residues 814-837 (TLLQNDKNEMNKDSSYDKKTDALD) and 860-892 (FSNDDEETKNKNKTNVNQKKKKNPNDKLDKNER). Composition is skewed to basic and acidic residues over residues 819–837 (DKNEMNKDSSYDKKTDALD) and 882–892 (NPNDKLDKNER). 975-982 (GPPGCGKT) lines the ATP pocket.

The protein belongs to the AAA ATPase family.

This Plasmodium falciparum (isolate 3D7) protein is Putative cell division cycle ATPase.